A 573-amino-acid polypeptide reads, in one-letter code: DNA polymerase lambda (573 aa).

The region spanning 35 to 131 (DARGWLSSLR…KLTDTDGFSL (97 aa)) is the BRCT domain. The disordered stretch occupies residues 126–235 (TDGFSLSSPK…GPDPAPEALG (110 aa)). Polar residues predominate over residues 127 to 149 (DGFSLSSPKRSLNEPQPSKSGQD). A DNA-binding region spans residues 263-277 (KAYNVQGDKWRALGY). The active-site Schiff-base intermediate with DNA is K310. The DNA-binding stretch occupies residues 343–346 (GTKT). DCTP-binding positions include R384, 415–418 (SFRR), and 424–427 (GDVD). Positions 418 to 427 (RGKVTCGDVD) are involved in primer binding. 3 residues coordinate Mn(2+): D425, D427, and D488. A DNA-binding region spans residues 464-503 (ENGQQQKYLGVCRLPGAGQRHRRLDIIVVPYSEFACALLY). N511 contacts dCTP.

This sequence belongs to the DNA polymerase type-X family. Interacts with PCNA. Interacts with PAXX; promoting POLL recruitment to double-strand breaks (DSBs) and stimulation of the end-filling activity of POLL. Interacts with XRCC4; promoting POLL recruitment to double-strand breaks (DSBs) and stimulation of the end-filling activity of POLL. Interacts with NHEJ1/XLF; promoting POLL recruitment to double-strand breaks (DSBs) and stimulation of the end-filling activity of POLL. The cofactor is Mn(2+).

It localises to the nucleus. The enzyme catalyses DNA(n) + a 2'-deoxyribonucleoside 5'-triphosphate = DNA(n+1) + diphosphate. DNA polymerase that functions in several pathways of DNA repair. Involved in base excision repair (BER) responsible for repair of lesions that give rise to abasic (AP) sites in DNA. Also contributes to DNA double-strand break repair by non-homologous end joining and homologous recombination. Has both template-dependent and template-independent (terminal transferase) DNA polymerase activities. Also has a 5'-deoxyribose-5-phosphate lyase (dRP lyase) activity. This Rattus norvegicus (Rat) protein is DNA polymerase lambda.